A 270-amino-acid chain; its full sequence is Phosphatidylglycerol--prolipoprotein diacylglyceryl transferase (270 aa).

7 consecutive transmembrane segments (helical) span residues 14–34 (VAFT…ILAL), 60–80 (YFFW…IAIY), 103–123 (FVGI…LATI), 133–153 (LWQL…FGRI), 181–201 (PSQL…LFFY), 209–229 (GELI…CEFF), and 235–255 (GIGF…LMFF). Arginine 152 serves as a coordination point for a 1,2-diacyl-sn-glycero-3-phospho-(1'-sn-glycerol).

Belongs to the Lgt family.

It localises to the cell inner membrane. The catalysed reaction is L-cysteinyl-[prolipoprotein] + a 1,2-diacyl-sn-glycero-3-phospho-(1'-sn-glycerol) = an S-1,2-diacyl-sn-glyceryl-L-cysteinyl-[prolipoprotein] + sn-glycerol 1-phosphate + H(+). It functions in the pathway protein modification; lipoprotein biosynthesis (diacylglyceryl transfer). In terms of biological role, catalyzes the transfer of the diacylglyceryl group from phosphatidylglycerol to the sulfhydryl group of the N-terminal cysteine of a prolipoprotein, the first step in the formation of mature lipoproteins. The sequence is that of Phosphatidylglycerol--prolipoprotein diacylglyceryl transferase from Campylobacter curvus (strain 525.92).